A 630-amino-acid chain; its full sequence is uncharacterized protein (630 aa).

2 helical membrane-spanning segments follow: residues 8 to 28 (LFNM…ASAV) and 258 to 278 (VDNS…PLVI). A disordered region spans residues 399 to 426 (EETSKPTEQPSPADSTSTPAAPEKGAAS). A compositionally biased stretch (polar residues) spans 404-417 (PTEQPSPADSTSTP).

This sequence belongs to the peptidase S1C family.

It is found in the cell membrane. This is an uncharacterized protein from Sinorhizobium fredii (strain NBRC 101917 / NGR234).